The primary structure comprises 328 residues: Peroxisomal adenine nucleotide transporter 1 (328 aa).

Transmembrane regions (helical) follow at residues 1–21 (MLTL…NIAV), 78–98 (TVTT…YTFI), 128–148 (LVLG…MAVV), 185–202 (LRTG…YASF), 226–246 (FILG…LIVA), and 277–297 (WKGV…LFAF). Solcar repeat units lie at residues 1–101 (MLTL…IRKS), 122–208 (PSTI…LKEV), and 220–304 (LSAV…LTKS).

Belongs to the mitochondrial carrier (TC 2.A.29) family.

It localises to the peroxisome membrane. Its function is as follows. Adenine nucleotide transporter involved in the uniport of ATP and adenine nucleotide hetero-exchange transport between the cytosol and the peroxisomal lumen. This transport is accompanied by a proton transport from the peroxisomal lumen to the cytosol. Transport of ATP into the peroxisome is required for beta-oxidation of medium-chain fatty acids. Required for growth on medium-chain fatty acids, pH gradient formation in peroxisomes and for normal peroxisome proliferation. The polypeptide is Peroxisomal adenine nucleotide transporter 1 (ANT1) (Saccharomyces cerevisiae (strain ATCC 204508 / S288c) (Baker's yeast)).